Reading from the N-terminus, the 342-residue chain is Tetraacyldisaccharide 4'-kinase (342 aa).

68–75 serves as a coordination point for ATP; sequence TVGGTGKT.

It belongs to the LpxK family.

It carries out the reaction a lipid A disaccharide + ATP = a lipid IVA + ADP + H(+). The protein operates within glycolipid biosynthesis; lipid IV(A) biosynthesis; lipid IV(A) from (3R)-3-hydroxytetradecanoyl-[acyl-carrier-protein] and UDP-N-acetyl-alpha-D-glucosamine: step 6/6. Transfers the gamma-phosphate of ATP to the 4'-position of a tetraacyldisaccharide 1-phosphate intermediate (termed DS-1-P) to form tetraacyldisaccharide 1,4'-bis-phosphate (lipid IVA). This chain is Tetraacyldisaccharide 4'-kinase, found in Burkholderia thailandensis (strain ATCC 700388 / DSM 13276 / CCUG 48851 / CIP 106301 / E264).